Here is a 341-residue protein sequence, read N- to C-terminus: tRNA N6-adenosine threonylcarbamoyltransferase (341 aa).

Positions 111 and 115 each coordinate Fe cation. Substrate-binding positions include 134 to 138 (LVSGG), D167, G180, and N272. D300 contacts Fe cation.

It belongs to the KAE1 / TsaD family. Requires Fe(2+) as cofactor.

The protein resides in the cytoplasm. It catalyses the reaction L-threonylcarbamoyladenylate + adenosine(37) in tRNA = N(6)-L-threonylcarbamoyladenosine(37) in tRNA + AMP + H(+). Functionally, required for the formation of a threonylcarbamoyl group on adenosine at position 37 (t(6)A37) in tRNAs that read codons beginning with adenine. Is involved in the transfer of the threonylcarbamoyl moiety of threonylcarbamoyl-AMP (TC-AMP) to the N6 group of A37, together with TsaE and TsaB. TsaD likely plays a direct catalytic role in this reaction. The polypeptide is tRNA N6-adenosine threonylcarbamoyltransferase (Edwardsiella ictaluri (strain 93-146)).